The primary structure comprises 140 residues: Profilin-2 (140 aa).

At alanine 2 the chain carries N-acetylalanine.

The protein belongs to the profilin family. In terms of assembly, occurs in many kinds of cells as a complex with monomeric actin in a 1:1 ratio. Interacts with PFN2. Interacts with ACTMAP (via N-terminus); the interaction may facilitate efficient cleavage of the acetylated N-terminus of immature actin by ACTMAP.

It is found in the cytoplasm. The protein resides in the cytoskeleton. Binds to actin and affects the structure of the cytoskeleton. At high concentrations, profilin prevents the polymerization of actin, whereas it enhances it at low concentrations. By binding to PIP2, it inhibits the formation of IP3 and DG. This is Profilin-2 (PFN2) from Bos taurus (Bovine).